The chain runs to 175 residues: Putative carbonic anhydrase-like protein YbcF (175 aa).

It belongs to the beta-class carbonic anhydrase family.

The sequence is that of Putative carbonic anhydrase-like protein YbcF (ybcF) from Bacillus subtilis (strain 168).